Reading from the N-terminus, the 298-residue chain is Protoheme IX farnesyltransferase (298 aa).

9 consecutive transmembrane segments (helical) span residues 26–46 (VVSL…PGAV), 52–72 (IFGT…NCLV), 93–113 (VSVP…LFML), 120–140 (LTMW…TVIL), 148–168 (IVIG…AVTG), 174–194 (ALLL…ALAL), 219–239 (LHVL…YLTQ), 241–261 (SGLI…YYAI), and 278–298 (YSIA…YFYF).

Belongs to the UbiA prenyltransferase family. Protoheme IX farnesyltransferase subfamily.

It is found in the cell inner membrane. The catalysed reaction is heme b + (2E,6E)-farnesyl diphosphate + H2O = Fe(II)-heme o + diphosphate. It functions in the pathway porphyrin-containing compound metabolism; heme O biosynthesis; heme O from protoheme: step 1/1. In terms of biological role, converts heme B (protoheme IX) to heme O by substitution of the vinyl group on carbon 2 of heme B porphyrin ring with a hydroxyethyl farnesyl side group. The protein is Protoheme IX farnesyltransferase of Nitrosomonas europaea (strain ATCC 19718 / CIP 103999 / KCTC 2705 / NBRC 14298).